We begin with the raw amino-acid sequence, 199 residues long: Homeobox protein ceh-19 (199 aa).

The tract at residues 1–42 is disordered; it reads MAFNIESLLEKKSNPVEEGNDFEEENDSEKNGEEDEEEEEKN. Positions 18 to 40 are enriched in acidic residues; that stretch reads EGNDFEEENDSEKNGEEDEEEEE. Positions 94–153 form a DNA-binding region, homeobox; it reads ERKPRQAYSARQLDRLETEFQTDKYLSVNKRIQLSQTLNLTETQIKTWFQNRRTKWKKQL.

It localises to the nucleus. Its function is as follows. Probable transcription factor. Required for MC motor neuron differentiation and function, including role in modulating pharyngeal pumping. Regulates gene expression of FMRFamide-like neuropeptide flp-2 in MC motor neurons. May act downstream of transcription factor pha-4. This Caenorhabditis elegans protein is Homeobox protein ceh-19 (ceh-19).